A 286-amino-acid polypeptide reads, in one-letter code: MERPVRVKAWVEENRGSFLPPVCNKLLHQKQLKIMFVGGPNTRKDYHIEEGEEVFYQLEGDMLLRVLERGKHRDVVIRQGEIFLLPAGVPHSPQRFANTVGLVIERRRLKTELDGLRYYVGDTTDVLFEKWFYCEDLGTQLAPIIQEFFSSEQYRTGKPNPDQLLKEPPFPLSTRSVMEPMCLEAWLDGHRKELQAGTPLSLFGDTYESQVMVHGQGSSEGLRRDVDVWLWQLEGSSVVTMEGQRLSLTLDDSLLVPAGTLYGWERGQGSVALSVTQDPACKKSLG.

The interval 1 to 160 (MERPVRVKAW…SEQYRTGKPN (160 aa)) is domain A (catalytic). Arginine 43 is a binding site for O2. Positions 47, 53, and 91 each coordinate Fe cation. Glutamate 53 is a binding site for substrate. Positions 95 and 105 each coordinate substrate. The linker stretch occupies residues 161-177 (PDQLLKEPPFPLSTRSV). Residues 178-286 (MEPMCLEAWL…QDPACKKSLG (109 aa)) are domain B.

Belongs to the 3-HAO family. In terms of assembly, monomer. Fe(2+) serves as cofactor.

It localises to the cytoplasm. Its subcellular location is the cytosol. The enzyme catalyses 3-hydroxyanthranilate + O2 = (2Z,4Z)-2-amino-3-carboxymuconate 6-semialdehyde. Its pathway is cofactor biosynthesis; NAD(+) biosynthesis; quinolinate from L-kynurenine: step 3/3. Catalyzes the oxidative ring opening of 3-hydroxyanthranilate to 2-amino-3-carboxymuconate semialdehyde, which spontaneously cyclizes to quinolinate. The chain is 3-hydroxyanthranilate 3,4-dioxygenase from Bos taurus (Bovine).